The sequence spans 1449 residues: Disease resistance protein RPP5 (1449 aa).

Positions 10–178 (RRYDVFPSFS…KISNDVSNKL (169 aa)) constitute a TIR domain. Glu85 is a catalytic residue. In terms of domain architecture, NB-ARC spans 192-446 (EAHIEAIKSV…IACLFNGFEV (255 aa)). 19 LRR repeats span residues 549–573 (MRNLQYLKIGDWSDGGQPQSLVYLP), 574–595 (LKLRLLDWDDCPLKSLPSTFKA), 597–618 (YLVNLIMKYSKLEKLWEGTLPL), 619–642 (GSLKKMNLLCSKNLKEIPDLSNAR), 644–665 (LEELDLEGCESLVTLPSSIQNA), 687–710 (MCNLEYLSVDCSRVEGTQGIVYFP), 712–732 (KLRLLLWNNCPLKRLHSNFKV), 733–755 (EYLVKLRMENSDLEKLWDGTQPL), 756–779 (GRLKQMFLRGSKYLKEIPDLSLAI), 802–825 (AIKLIYLDISDCKKLESFPTDLNL), 826–849 (ESLEYLNLTGCPNLRNFPAIKMGC), 915–939 (LGSLEEMDLSESENLTEIPDLSKAT), 941–962 (LKHLYLNNCKSLVTLPSTIGNL), 963–985 (QKLVRLEMKECTGLEVLPTDVNL), 986–1011 (SSLETLDLSGCSSLRTFPLISKSIKW), 1028–1052 (ATKLESLILNNCKSLVTLPSTIGNL), 1053–1077 (QNLRRLYMKRCTGLEVLPTDVNLSS), 1096–1119 (STNIVWLYLENTAIGEVPCCIEDF), and 1120–1143 (TRLRVLLMYCCQRLKNISPNIFRL).

Interacts with RSH1.

The enzyme catalyses NAD(+) + H2O = ADP-D-ribose + nicotinamide + H(+). TIR-NB-LRR receptor-like protein that confers resistance to the pathogen Hyaloperonospora arabidopsis isolate Noco2 (downy mildew disease). Confers resistance to H.arabidopsis isolates Emoy2, Emwa1 and Noco2. This is Disease resistance protein RPP5 from Arabidopsis thaliana (Mouse-ear cress).